The chain runs to 434 residues: Tol-Pal system protein TolB (434 aa).

Residues 1-21 form the signal peptide; the sequence is MIVRRALALAALALAASPALA. The tract at residues 411 to 434 is disordered; sequence GDRQTPVTSGKTDLAAPAWGPLAP.

Belongs to the TolB family. In terms of assembly, the Tol-Pal system is composed of five core proteins: the inner membrane proteins TolA, TolQ and TolR, the periplasmic protein TolB and the outer membrane protein Pal. They form a network linking the inner and outer membranes and the peptidoglycan layer.

Its subcellular location is the periplasm. Functionally, part of the Tol-Pal system, which plays a role in outer membrane invagination during cell division and is important for maintaining outer membrane integrity. This chain is Tol-Pal system protein TolB, found in Anaeromyxobacter dehalogenans (strain 2CP-C).